A 66-amino-acid chain; its full sequence is Large ribosomal subunit protein bL35 (66 aa).

It belongs to the bacterial ribosomal protein bL35 family.

The chain is Large ribosomal subunit protein bL35 from Brucella anthropi (strain ATCC 49188 / DSM 6882 / CCUG 24695 / JCM 21032 / LMG 3331 / NBRC 15819 / NCTC 12168 / Alc 37) (Ochrobactrum anthropi).